We begin with the raw amino-acid sequence, 201 residues long: Akirin (201 aa).

The interval Met-1 to Leu-133 is disordered. The Nuclear localization signal motif lies at Pro-20–Cys-25. Phosphoserine is present on residues Ser-39 and Ser-41. Composition is skewed to polar residues over residues Gly-44 to Asn-57 and Glu-65 to Ala-75. Ser-67 is subject to Phosphoserine. Over residues Ser-112 to Glu-122 the composition is skewed to low complexity. A phosphoserine mark is found at Ser-123 and Ser-129.

Belongs to the akirin family. Interacts with dmap1. Interacts with bap60 and rel; interaction is immune stimulation-dependent; activates selected rel target gene promoters. Interacts with bap55; interaction is immune stimulation-dependent. Interacts with twi. Post-translationally, polyubiquitinated via 'Lys-63'-linked ubiquitin by Hyd, promoting interaction with rel. As to expression, ubiquitous.

The protein resides in the nucleus. Functionally, molecular adapter that acts as a bridge between a variety of multiprotein complexes, and which is required for embryonic development and for normal innate immune response. Acts as a regulator of embryonic myogenesis by bridging Twist (twi) with the SWI/SNF-like Brahma complex, promoting expression of twi-regulated genes during myogenesis. Effector of immune deficiency pathway (Imd) by acting either downstream of, or at the level of, the NF-kappa-B factor Relish (Rel). Acts by bridging the NF-kappa-B factor Rel and the Brahma complex through bap60 interaction, leading to activation a subset of NF-kappa-B factor Relish (Rel) effector genes. Not part of the Toll pathway. Required for the formation of the heart by promoting expression ot tinman (tin). In Drosophila melanogaster (Fruit fly), this protein is Akirin.